A 312-amino-acid polypeptide reads, in one-letter code: D-alanine--D-alanine ligase (312 aa).

One can recognise an ATP-grasp domain in the interval 108–308; the sequence is KLVWQQTGIP…YSELVVKVLS (201 aa). 138-193 provides a ligand contact to ATP; sequence VAKLGMPLFVKPASEGSSVAVEKVKSADALPAALEEAAKHDKIVIVEKSIEGGGEY. Asp-262, Glu-275, and Asn-277 together coordinate Mg(2+).

It belongs to the D-alanine--D-alanine ligase family. It depends on Mg(2+) as a cofactor. Mn(2+) serves as cofactor.

The protein localises to the cytoplasm. It carries out the reaction 2 D-alanine + ATP = D-alanyl-D-alanine + ADP + phosphate + H(+). It functions in the pathway cell wall biogenesis; peptidoglycan biosynthesis. Its function is as follows. Cell wall formation. The sequence is that of D-alanine--D-alanine ligase from Burkholderia thailandensis (strain ATCC 700388 / DSM 13276 / CCUG 48851 / CIP 106301 / E264).